We begin with the raw amino-acid sequence, 89 residues long: Small ribosomal subunit protein uS15 (89 aa).

The protein belongs to the universal ribosomal protein uS15 family. In terms of assembly, part of the 30S ribosomal subunit. Forms a bridge to the 50S subunit in the 70S ribosome, contacting the 23S rRNA.

Its function is as follows. One of the primary rRNA binding proteins, it binds directly to 16S rRNA where it helps nucleate assembly of the platform of the 30S subunit by binding and bridging several RNA helices of the 16S rRNA. In terms of biological role, forms an intersubunit bridge (bridge B4) with the 23S rRNA of the 50S subunit in the ribosome. The protein is Small ribosomal subunit protein uS15 of Parafrankia sp. (strain EAN1pec).